Here is a 139-residue protein sequence, read N- to C-terminus: Transcription antitermination protein NusB (139 aa).

The protein belongs to the NusB family.

In terms of biological role, involved in transcription antitermination. Required for transcription of ribosomal RNA (rRNA) genes. Binds specifically to the boxA antiterminator sequence of the ribosomal RNA (rrn) operons. This is Transcription antitermination protein NusB from Edwardsiella ictaluri (strain 93-146).